Reading from the N-terminus, the 362-residue chain is 3-dehydroquinate synthase (362 aa).

NAD(+)-binding positions include 72–77, 106–110, 130–131, lysine 142, and lysine 151; these read SGEQAK, GVVGD, and TT. Positions 184, 246, and 263 each coordinate Zn(2+).

This sequence belongs to the sugar phosphate cyclases superfamily. Dehydroquinate synthase family. NAD(+) is required as a cofactor. It depends on Co(2+) as a cofactor. The cofactor is Zn(2+).

It is found in the cytoplasm. The catalysed reaction is 7-phospho-2-dehydro-3-deoxy-D-arabino-heptonate = 3-dehydroquinate + phosphate. It participates in metabolic intermediate biosynthesis; chorismate biosynthesis; chorismate from D-erythrose 4-phosphate and phosphoenolpyruvate: step 2/7. Catalyzes the conversion of 3-deoxy-D-arabino-heptulosonate 7-phosphate (DAHP) to dehydroquinate (DHQ). The chain is 3-dehydroquinate synthase from Bacillus subtilis (strain 168).